Reading from the N-terminus, the 208-residue chain is Protein-L-isoaspartate O-methyltransferase (208 aa).

Ser59 is a catalytic residue.

It belongs to the methyltransferase superfamily. L-isoaspartyl/D-aspartyl protein methyltransferase family.

The protein localises to the cytoplasm. The catalysed reaction is [protein]-L-isoaspartate + S-adenosyl-L-methionine = [protein]-L-isoaspartate alpha-methyl ester + S-adenosyl-L-homocysteine. In terms of biological role, catalyzes the methyl esterification of L-isoaspartyl residues in peptides and proteins that result from spontaneous decomposition of normal L-aspartyl and L-asparaginyl residues. It plays a role in the repair and/or degradation of damaged proteins. The protein is Protein-L-isoaspartate O-methyltransferase of Cronobacter sakazakii (strain ATCC BAA-894) (Enterobacter sakazakii).